The primary structure comprises 167 residues: Pathogenesis-related protein PRMS (167 aa).

Residues 1 to 27 (MEASNKLAVLLLWLVMAAATAVHPSYS) form the signal peptide. Residues 37-155 (PQNSARAAVG…NRGVFIICNY (119 aa)) form the SCP domain. 3 disulfides stabilise this stretch: Cys-71-Cys-143, Cys-116-Cys-122, and Cys-138-Cys-153.

The protein belongs to the CRISP family.

Probably involved in the defense reaction of plants against pathogens. The chain is Pathogenesis-related protein PRMS (PRMS) from Zea mays (Maize).